A 455-amino-acid chain; its full sequence is Argininosuccinate lyase (455 aa).

It belongs to the lyase 1 family. Argininosuccinate lyase subfamily.

It is found in the cytoplasm. It carries out the reaction 2-(N(omega)-L-arginino)succinate = fumarate + L-arginine. It participates in amino-acid biosynthesis; L-arginine biosynthesis; L-arginine from L-ornithine and carbamoyl phosphate: step 3/3. In Shewanella baltica (strain OS195), this protein is Argininosuccinate lyase.